The chain runs to 766 residues: 5-methyltetrahydropteroyltriglutamate--homocysteine methyltransferase (766 aa).

5-methyltetrahydropteroyltri-L-glutamate contacts are provided by residues Arg-23–Lys-26 and Lys-121. Residues Ile-438–Ser-440 and Glu-491 contribute to the L-homocysteine site. Residues Ile-438–Ser-440 and Glu-491 contribute to the L-methionine site. 5-methyltetrahydropteroyltri-L-glutamate contacts are provided by residues Arg-522–Cys-523 and Trp-568. L-homocysteine is bound at residue Asp-606. Residue Asp-606 coordinates L-methionine. Residue Glu-612 coordinates 5-methyltetrahydropteroyltri-L-glutamate. The Zn(2+) site is built by His-648, Cys-650, and Glu-672. His-701 functions as the Proton donor in the catalytic mechanism. Cys-733 contributes to the Zn(2+) binding site.

Belongs to the vitamin-B12 independent methionine synthase family. Zn(2+) is required as a cofactor.

The catalysed reaction is 5-methyltetrahydropteroyltri-L-glutamate + L-homocysteine = tetrahydropteroyltri-L-glutamate + L-methionine. It participates in amino-acid biosynthesis; L-methionine biosynthesis via de novo pathway; L-methionine from L-homocysteine (MetE route): step 1/1. Its function is as follows. Catalyzes the transfer of a methyl group from 5-methyltetrahydrofolate to homocysteine resulting in methionine formation. The chain is 5-methyltetrahydropteroyltriglutamate--homocysteine methyltransferase from Photobacterium profundum (strain SS9).